We begin with the raw amino-acid sequence, 370 residues long: Peptide chain release factor 1 (370 aa).

Q237 is subject to N5-methylglutamine. A compositionally biased stretch (basic and acidic residues) spans 286–296; that stretch reads ERQRSARDATR. Positions 286 to 310 are disordered; that stretch reads ERQRSARDATRKSQVGTGDRSEKIR.

Belongs to the prokaryotic/mitochondrial release factor family. Post-translationally, methylated by PrmC. Methylation increases the termination efficiency of RF1.

Its subcellular location is the cytoplasm. In terms of biological role, peptide chain release factor 1 directs the termination of translation in response to the peptide chain termination codons UAG and UAA. The protein is Peptide chain release factor 1 of Anaeromyxobacter dehalogenans (strain 2CP-C).